The following is a 260-amino-acid chain: Triosephosphate isomerase (260 aa).

Residue 11–13 (NWK) participates in substrate binding. The Electrophile role is filled by His-103. The Proton acceptor role is filled by Glu-175. Residues Gly-181, Ser-220, and 241–242 (GG) each bind substrate.

It belongs to the triosephosphate isomerase family. Homodimer.

Its subcellular location is the cytoplasm. It catalyses the reaction D-glyceraldehyde 3-phosphate = dihydroxyacetone phosphate. The protein operates within carbohydrate biosynthesis; gluconeogenesis. It functions in the pathway carbohydrate degradation; glycolysis; D-glyceraldehyde 3-phosphate from glycerone phosphate: step 1/1. Functionally, involved in the gluconeogenesis. Catalyzes stereospecifically the conversion of dihydroxyacetone phosphate (DHAP) to D-glyceraldehyde-3-phosphate (G3P). The sequence is that of Triosephosphate isomerase from Shewanella frigidimarina (strain NCIMB 400).